The primary structure comprises 558 residues: Delta-1-pyrroline-5-carboxylate dehydrogenase, mitochondrial (558 aa).

Residues Ser-198, Lys-223, and 276 to 280 (GSTGV) each bind NAD(+). Glu-306 (proton acceptor) is an active-site residue. The active-site Nucleophile is the Cys-340. Residue Glu-438 participates in NAD(+) binding.

This sequence belongs to the aldehyde dehydrogenase family.

The protein resides in the mitochondrion matrix. It carries out the reaction L-glutamate 5-semialdehyde + NAD(+) + H2O = L-glutamate + NADH + 2 H(+). It participates in amino-acid degradation; L-proline degradation into L-glutamate; L-glutamate from L-proline: step 2/2. Its function is as follows. Irreversible conversion of delta-1-pyrroline-5-carboxylate (P5C), derived either from proline or ornithine, to glutamate. This is a necessary step in the pathway interconnecting the urea and tricarboxylic acid cycles. The protein is Delta-1-pyrroline-5-carboxylate dehydrogenase, mitochondrial of Dictyostelium discoideum (Social amoeba).